A 379-amino-acid chain; its full sequence is Eukaryotic translation initiation factor 3 subunit M (379 aa).

Residues 179 to 341 (RSEEASKVMI…RKVIISSVAQ (163 aa)) enclose the PCI domain.

Belongs to the eIF-3 subunit M family. As to quaternary structure, component of the eukaryotic translation initiation factor 3 (eIF-3) complex.

The protein localises to the cytoplasm. Its function is as follows. Component of the eukaryotic translation initiation factor 3 (eIF-3) complex, which is involved in protein synthesis of a specialized repertoire of mRNAs and, together with other initiation factors, stimulates binding of mRNA and methionyl-tRNAi to the 40S ribosome. The eIF-3 complex specifically targets and initiates translation of a subset of mRNAs involved in cell proliferation. This chain is Eukaryotic translation initiation factor 3 subunit M, found in Nematostella vectensis (Starlet sea anemone).